The chain runs to 194 residues: Fibroblast growth factor 7 (194 aa).

The first 31 residues, 1–31 (MRKWILTWILPSLLHRSCFHIICLVGTLSLD), serve as a signal peptide directing secretion. Asn45 carries N-linked (GlcNAc...) asparagine glycosylation.

It belongs to the heparin-binding growth factors family. In terms of assembly, interacts with FGFBP1. Interacts with FGFR2. Affinity between fibroblast growth factors (FGFs) and their receptors is increased by heparan sulfate glycosaminoglycans that function as coreceptors.

It localises to the secreted. In terms of biological role, plays an important role in the regulation of embryonic development, cell proliferation and cell differentiation. Required for normal branching morphogenesis. Growth factor active on keratinocytes. Possible major paracrine effector of normal epithelial cell proliferation. In Sus scrofa (Pig), this protein is Fibroblast growth factor 7 (FGF7).